Reading from the N-terminus, the 288-residue chain is Acetyl-coenzyme A carboxylase carboxyl transferase subunit beta (288 aa).

In terms of domain architecture, CoA carboxyltransferase N-terminal spans 34-288 (LFAKCPACKH…HLVAFHGGVS (255 aa)). Residues cysteine 38, cysteine 41, cysteine 56, and cysteine 59 each coordinate Zn(2+). The C4-type zinc finger occupies 38-59 (CPACKHMIYQKDLGPAKICPTC).

It belongs to the AccD/PCCB family. In terms of assembly, acetyl-CoA carboxylase is a heterohexamer composed of biotin carboxyl carrier protein (AccB), biotin carboxylase (AccC) and two subunits each of ACCase subunit alpha (AccA) and ACCase subunit beta (AccD). Zn(2+) is required as a cofactor.

The protein localises to the cytoplasm. It catalyses the reaction N(6)-carboxybiotinyl-L-lysyl-[protein] + acetyl-CoA = N(6)-biotinyl-L-lysyl-[protein] + malonyl-CoA. Its pathway is lipid metabolism; malonyl-CoA biosynthesis; malonyl-CoA from acetyl-CoA: step 1/1. Component of the acetyl coenzyme A carboxylase (ACC) complex. Biotin carboxylase (BC) catalyzes the carboxylation of biotin on its carrier protein (BCCP) and then the CO(2) group is transferred by the transcarboxylase to acetyl-CoA to form malonyl-CoA. The protein is Acetyl-coenzyme A carboxylase carboxyl transferase subunit beta of Streptococcus equi subsp. equi (strain 4047).